The chain runs to 424 residues: Tol-Pal system protein TolB (424 aa).

The signal sequence occupies residues methionine 1–leucine 20.

This sequence belongs to the TolB family. As to quaternary structure, the Tol-Pal system is composed of five core proteins: the inner membrane proteins TolA, TolQ and TolR, the periplasmic protein TolB and the outer membrane protein Pal. They form a network linking the inner and outer membranes and the peptidoglycan layer.

The protein localises to the periplasm. Its function is as follows. Part of the Tol-Pal system, which plays a role in outer membrane invagination during cell division and is important for maintaining outer membrane integrity. The sequence is that of Tol-Pal system protein TolB from Vesicomyosocius okutanii subsp. Calyptogena okutanii (strain HA).